Reading from the N-terminus, the 487-residue chain is Probable cytosol aminopeptidase (487 aa).

Positions 253 and 258 each coordinate Mn(2+). The active site involves K265. Positions 277, 337, and 339 each coordinate Mn(2+). Residue R341 is part of the active site.

It belongs to the peptidase M17 family. Mn(2+) serves as cofactor.

It localises to the cytoplasm. It carries out the reaction Release of an N-terminal amino acid, Xaa-|-Yaa-, in which Xaa is preferably Leu, but may be other amino acids including Pro although not Arg or Lys, and Yaa may be Pro. Amino acid amides and methyl esters are also readily hydrolyzed, but rates on arylamides are exceedingly low.. The catalysed reaction is Release of an N-terminal amino acid, preferentially leucine, but not glutamic or aspartic acids.. In terms of biological role, presumably involved in the processing and regular turnover of intracellular proteins. Catalyzes the removal of unsubstituted N-terminal amino acids from various peptides. In Parasynechococcus marenigrum (strain WH8102), this protein is Probable cytosol aminopeptidase.